Here is an 89-residue protein sequence, read N- to C-terminus: Small ribosomal subunit protein uS19 (89 aa).

This sequence belongs to the universal ribosomal protein uS19 family.

In terms of biological role, protein S19 forms a complex with S13 that binds strongly to the 16S ribosomal RNA. This Bacteroides fragilis (strain YCH46) protein is Small ribosomal subunit protein uS19.